The following is a 144-amino-acid chain: D-aminoacyl-tRNA deacylase (144 aa).

The Gly-cisPro motif, important for rejection of L-amino acids motif lies at 136–137 (GP).

It belongs to the DTD family. Homodimer.

Its subcellular location is the cytoplasm. The catalysed reaction is glycyl-tRNA(Ala) + H2O = tRNA(Ala) + glycine + H(+). It catalyses the reaction a D-aminoacyl-tRNA + H2O = a tRNA + a D-alpha-amino acid + H(+). Its function is as follows. An aminoacyl-tRNA editing enzyme that deacylates mischarged D-aminoacyl-tRNAs. Also deacylates mischarged glycyl-tRNA(Ala), protecting cells against glycine mischarging by AlaRS. Acts via tRNA-based rather than protein-based catalysis; rejects L-amino acids rather than detecting D-amino acids in the active site. By recycling D-aminoacyl-tRNA to D-amino acids and free tRNA molecules, this enzyme counteracts the toxicity associated with the formation of D-aminoacyl-tRNA entities in vivo and helps enforce protein L-homochirality. This chain is D-aminoacyl-tRNA deacylase, found in Actinobacillus pleuropneumoniae serotype 5b (strain L20).